The chain runs to 651 residues: MEFKGYIKEKFPYPKVREPQKRMMLKIYECIKNKRNLIVEAPTGVGKTLGYLIPALYFAERRKRVLILTETIDQQVRIYEDLSSLRHNLKVAFLMGKSNFICKSKGGKANRLYCQLNKKCLYRPNKRPICYCGTKKQPVNLGDKVIYYCPYCTCEYQKAKIESILADIVVMNNSMFYYAKEDIEAKRDIDIIICDEAHKLESSIRNTSTIIINPELPINRLKYMAIHYAPNILKKRLDIGDENFWEIIEKYLTSRGINIDICKETIIFDGENLSSWKYKTELAVLGAILDAYYQINNIKNKILRFNENEEIDREELRFEIDNKALIAIELDFIHKKKLSDLYLLEFIENIKNLRYINENYVVYRSGNSLLCEPVFVSSHLKELYGNAVVIHCSATIGNLKMHALKTGLDKAEFLILESPFPKNRKKIIALKDGVDMKYERKDREKANKNLLKILEAINGNSLVLFKSFEDLDSFYKYLKREITKTNIKNKNIHVYEQGMDGKEAKELKERFEKIGGILLATGRFAEGVDIPGEALVGVVIDSLPFPVPTPLILREQKILEERFKIRGVRDAHWRAFLMTSFDRMARTLVQMIGRLIRTENDYGVVVIQDKRFADWVGRVMREKGYLKDNYEVMSLDMAIKYIPKFMSQFKN.

Residues 6-255 (YIKEKFPYPK…EIIEKYLTSR (250 aa)) form the Helicase ATP-binding domain. An ATP-binding site is contributed by 41–48 (APTGVGKT). Residues C102, C149, and C154 each coordinate [4Fe-4S] cluster. A DEAH box motif is present at residues 195–198 (DEAH). The Helicase C-terminal domain occupies 449-638 (NLLKILEAIN…NYEVMSLDMA (190 aa)).

It belongs to the helicase family. DinG subfamily. It depends on [4Fe-4S] cluster as a cofactor.

The enzyme catalyses Couples ATP hydrolysis with the unwinding of duplex DNA at the replication fork by translocating in the 5'-3' direction. This creates two antiparallel DNA single strands (ssDNA). The leading ssDNA polymer is the template for DNA polymerase III holoenzyme which synthesizes a continuous strand.. It catalyses the reaction ATP + H2O = ADP + phosphate + H(+). Functionally, might be a 5'-3' DNA helicase. The polypeptide is Probable ATP-dependent helicase MJ0942 (Methanocaldococcus jannaschii (strain ATCC 43067 / DSM 2661 / JAL-1 / JCM 10045 / NBRC 100440) (Methanococcus jannaschii)).